The following is an 886-amino-acid chain: Cadherin-1 (886 aa).

The first 23 residues, 1 to 23 (MGARCRSFSALLLLLQVSSWLCQ), serve as a signal peptide directing secretion. Residues 24 to 158 (QPESESDSCR…FHQGLRRQKR (135 aa)) constitute a propeptide that is removed on maturation. Topologically, residues 24-713 (QPESESDSCR…SLEAGLQVPA (690 aa)) are extracellular. 5 consecutive Cadherin domains span residues 159–266 (DWVI…RPEF), 267–379 (IQEV…APIF), 380–490 (NPST…APIF), 491–597 (VPAE…DNAP), and 598–701 (IPEP…NCMK). Asp261 serves as a coordination point for Ca(2+). O-linked (Man...) serine glycans are attached at residues Ser284 and Ser289. Asp292 contacts Ca(2+). O-linked (Man...) threonine glycans are attached at residues Thr362, Thr474, Thr476, and Thr513. Asn562 carries an N-linked (GlcNAc...) asparagine glycan. 3 O-linked (Man...) threonine glycosylation sites follow: Thr580, Thr582, and Thr584. Asn641 carries N-linked (GlcNAc...) asparagine glycosylation. The helical transmembrane segment at 714-734 (ILGILGGILALLILILLLLLF) threads the bilayer. The Cytoplasmic segment spans residues 735–886 (LRRRTVVKEP…ADMYGGGEED (152 aa)). The tract at residues 751 to 771 (DTRDNVYYYDEEGGGEEDQDF) is disordered. Phosphotyrosine; by SRC is present on residues Tyr757, Tyr758, and Tyr759. The span at 759-771 (YDEEGGGEEDQDF) shows a compositional bias: acidic residues. A required for binding CTNND1 and PSEN1 region spans residues 762–773 (EGGGEEDQDFDL). A phosphoserine mark is found at Ser774, Ser797, Ser842, Ser844, and Ser850. The segment at 815-886 (IDENLKAADS…ADMYGGGEED (72 aa)) is required for binding alpha, beta and.

Homodimer; disulfide-linked. Component of an E-cadherin/ catenin adhesion complex composed of at least E-cadherin/CDH1, beta-catenin/CTNNB1 or gamma-catenin/JUP, and potentially alpha-catenin/CTNNA1; the complex is located to adherens junctions. Found in a complex composed of CDH1, RAP1A and PKP3; PKP3 acts as a scaffold protein within the complex, the complex is required for CDH1 localization to mature desmosome cell junctions. Interacts with the TRPV4 and CTNNB1 complex. Interacts with CTNND1. The stable association of CTNNA1 is controversial as CTNNA1 was shown not to bind to F-actin when assembled in the complex. Alternatively, the CTNNA1-containing complex may be linked to F-actin by other proteins such as LIMA1. Interaction with PSEN1, cleaves CDH1 resulting in the disassociation of cadherin-based adherens junctions (CAJs). Interacts with AJAP1 and DLGAP5. Interacts with TBC1D2. Interacts with LIMA1. Interacts with CAV1. Interacts with PIP5K1C. Interacts with DDR1; this stabilizes CDH1 at the cell surface and inhibits its internalization. Interacts with RAPGEF2. Interacts with RAB8B. Interacts with KLRG1. Forms a ternary complex composed of ADAM10, CADH1 and EPHA4; within the complex, CADH1 is cleaved by ADAM10 which disrupts adherens junctions. Interacts with SPEF1. Interacts with CTNNB1 and PKP2. Interacts with AMOTL2; the interaction may facilitate binding of radial actin fibers to cell junction complexes. Interacts with DSG3; the interaction is required for CDH1 localization to developing adherens junctions. During apoptosis or with calcium influx, cleaved by a membrane-bound metalloproteinase (ADAM10), PS1/gamma-secretase and caspase-3. Processing by the metalloproteinase, induced by calcium influx, causes disruption of cell-cell adhesion and the subsequent release of beta-catenin into the cytoplasm. The residual membrane-tethered cleavage product is rapidly degraded via an intracellular proteolytic pathway. Cleavage by caspase-3 releases the cytoplasmic tail resulting in disintegration of the actin microfilament system. The gamma-secretase-mediated cleavage promotes disassembly of adherens junctions. During development of the cochlear organ of Corti, cleavage by ADAM10 at adherens junctions promotes pillar cell separation. In terms of processing, N-glycosylation at Asn-641 is essential for expression, folding and trafficking. Addition of bisecting N-acetylglucosamine by MGAT3 modulates its cell membrane location. Post-translationally, ubiquitinated by a SCF complex containing SKP2, which requires prior phosphorylation by CK1/CSNK1A1. Ubiquitinated by CBLL1/HAKAI, requires prior phosphorylation at Tyr-758. O-glycosylated. O-manosylated by TMTC1, TMTC2, TMTC3 or TMTC4. Ser-289 and Thr-513 are O-manosylated by TMTC2 or TMTC4 but not TMTC1 or TMTC3.

Its subcellular location is the cell junction. It is found in the adherens junction. The protein resides in the cell membrane. It localises to the endosome. The protein localises to the golgi apparatus. Its subcellular location is the trans-Golgi network. It is found in the cytoplasm. The protein resides in the desmosome. In terms of biological role, cadherins are calcium-dependent cell adhesion proteins. They preferentially interact with themselves in a homophilic manner in connecting cells; cadherins may thus contribute to the sorting of heterogeneous cell types. CDH1 is involved in mechanisms regulating cell-cell adhesions, mobility and proliferation of epithelial cells. Promotes organization of radial actin fiber structure and cellular response to contractile forces, via its interaction with AMOTL2 which facilitates anchoring of radial actin fibers to CDH1 junction complexes at the cell membrane. Plays a role in the early stages of desmosome cell-cell junction formation via facilitating the recruitment of DSG2 and DSP to desmosome plaques. Has a potent invasive suppressor role. It is a ligand for integrin alpha-E/beta-7. E-Cad/CTF2 promotes non-amyloidogenic degradation of Abeta precursors. Has a strong inhibitory effect on APP C99 and C83 production. The sequence is that of Cadherin-1 (Cdh1) from Rattus norvegicus (Rat).